Reading from the N-terminus, the 316-residue chain is tRNA dimethylallyltransferase (316 aa).

ATP is bound at residue 17 to 24; it reads GPTASGKT. Substrate is bound at residue 19 to 24; it reads TASGKT. Interaction with substrate tRNA regions lie at residues 42-45, 166-170, 247-252, and 280-287; these read DSAL, QRLSR, RCVGYR, and KRQITWLR.

The protein belongs to the IPP transferase family. In terms of assembly, monomer. Requires Mg(2+) as cofactor.

It catalyses the reaction adenosine(37) in tRNA + dimethylallyl diphosphate = N(6)-dimethylallyladenosine(37) in tRNA + diphosphate. Its function is as follows. Catalyzes the transfer of a dimethylallyl group onto the adenine at position 37 in tRNAs that read codons beginning with uridine, leading to the formation of N6-(dimethylallyl)adenosine (i(6)A). In Shigella boydii serotype 18 (strain CDC 3083-94 / BS512), this protein is tRNA dimethylallyltransferase.